A 1061-amino-acid polypeptide reads, in one-letter code: Transcription factor GTE10 (1061 aa).

2 disordered regions span residues 32-56 and 106-152; these read ERMN…NNGV and NDHS…RLNV. Basic and acidic residues predominate over residues 109 to 118; the sequence is SCSDGPRRPP. The 107-residue stretch at 156–262 folds into the Bromo domain; that stretch reads YTVASVMKEC…KYFESGWKSI (107 aa). An NET domain is found at 304 to 386; it reads KLRVEPAKLV…DYLREKKKSM (83 aa). Disordered stretches follow at residues 443–518, 538–558, 606–645, and 710–1033; these read ACRN…LNEL, VPDE…PDKR, KERL…ARQA, and HLGL…GNGK. Positions 448 to 476 are enriched in low complexity; sequence ESSSSSSSSSESGSSSSDSDSCSSSGSET. Positions 477-506 are enriched in basic and acidic residues; it reads DSIKASKPTSREEKKQPGVGIDKKEDDSNS. The stretch at 588-658 forms a coiled coil; the sequence is PEKLRIEREE…MEKTVEINEG (71 aa). Basic and acidic residues-rich tracts occupy residues 733–755, 770–792, 828–852, 860–883, and 912–929; these read RKVE…RVEG, EAHD…ERQL, EEVH…EDPR, VSEK…REEQ, and LSLD…REEG. Positions 852–893 form a coiled coil; the sequence is RASGNEESVSEKAQDYENQRDEKINQSEREEQLENVLEQESS. Polar residues predominate over residues 940–949; the sequence is LVSQKTQDNG. 2 stretches are compositionally biased toward basic and acidic residues: residues 952–962 and 990–1002; these read EDEKSINKIEG and GEQK…KGVE.

As to quaternary structure, interacts with TIP/NAC091. As to expression, widely expressed in all tissues.

It is found in the nucleus. Its function is as follows. Acts as a negative regulator in plant response to changes in environmental conditions through the control of ABA-regulated gene expression. This Arabidopsis thaliana (Mouse-ear cress) protein is Transcription factor GTE10 (GTE10).